A 441-amino-acid polypeptide reads, in one-letter code: MKAREVNFDGLVGLTHHYAGLSFGNEASTKHRFQVSNPKLAARQGLAKMKALADAGFPQAVIPPQERPNLAALRQIGFTGSDQQVLEKAWRAAPHLLSAASSASSMWVANAATVCPSADALDGKVHLTVANLNNKFHRASEAPGTERLLRAIFRDESRFAVHGALPQVAMFGDEGAANHNRLGGDYGEPGLQLFIYGREESGALVPARYPARQTLEASQAVARLNQVDPQRVMFAQQNPAVIDQGVFHNDVIAVSNRQVLFCHEHAFLHQQALFDALAEKVPGFTPLVVPAGAVSVQDAVETYLFNSQLLSRDDGTMVLVLPEESRRHEGVWRYLNTLVAADNPISELKVFDLRESMANGGGPACLRLRVVLTDDERQAVNPAVMMDDTLFTRLNAWVDKYYRDRLTQEDLVDPQLLREGREALDELSRLLSLGNVYPFQQ.

Residues Ala19 to Ser28, Asn110, and His137 to Arg138 contribute to the substrate site. Residue Glu174 is part of the active site. Substrate is bound at residue Arg212. His248 is an active-site residue. Asp250 and Asn359 together coordinate substrate. The Nucleophile role is filled by Cys365.

It belongs to the succinylarginine dihydrolase family. Homodimer.

The catalysed reaction is N(2)-succinyl-L-arginine + 2 H2O + 2 H(+) = N(2)-succinyl-L-ornithine + 2 NH4(+) + CO2. It functions in the pathway amino-acid degradation; L-arginine degradation via AST pathway; L-glutamate and succinate from L-arginine: step 2/5. Catalyzes the hydrolysis of N(2)-succinylarginine into N(2)-succinylornithine, ammonia and CO(2). This Cronobacter sakazakii (strain ATCC BAA-894) (Enterobacter sakazakii) protein is N-succinylarginine dihydrolase.